The following is an 86-amino-acid chain: HssA/B-like protein 60 (86 aa).

The interval 11 to 33 is disordered; that stretch reads GNIKSSSKSNIASSSSSSSSQSL.

The protein belongs to the hssA/B family.

The polypeptide is HssA/B-like protein 60 (hssl60) (Dictyostelium discoideum (Social amoeba)).